Here is a 60-residue protein sequence, read N- to C-terminus: Large ribosomal subunit protein uL30 (60 aa).

The protein belongs to the universal ribosomal protein uL30 family. As to quaternary structure, part of the 50S ribosomal subunit.

The polypeptide is Large ribosomal subunit protein uL30 (Flavobacterium johnsoniae (strain ATCC 17061 / DSM 2064 / JCM 8514 / BCRC 14874 / CCUG 350202 / NBRC 14942 / NCIMB 11054 / UW101) (Cytophaga johnsonae)).